An 870-amino-acid polypeptide reads, in one-letter code: Radial spoke head 10 homolog B2 (870 aa).

Over residues 1–16 (MVKEKKKADKKGEKSA) the composition is skewed to basic and acidic residues. Residues 1–44 (MVKEKKKADKKGEKSARSPSSLSDNLDFSKQDGNTTRQEMSPAG) are disordered. Over residues 17–39 (RSPSSLSDNLDFSKQDGNTTRQE) the composition is skewed to polar residues. MORN repeat units follow at residues 86–108 (YEGE…GGCT), 109–131 (YRGM…DGLK), 132–154 (YEGD…DGSM), 155–177 (YEGE…TQPV), 179–201 (YIGH…QEGT), 204–226 (YEGD…SGNI), 227–249 (YEGQ…TTNE), 251–273 (YTGR…LKRI), 284–306 (YIGE…SGAM), and 307–329 (YDGE…NGRV). The segment at 674–704 (NKSPSAVMSHESDAAHSDSARSSSSKLELSP) is disordered. Positions 683–692 (HESDAAHSDS) are enriched in basic and acidic residues. Over residues 693 to 703 (ARSSSSKLELS) the composition is skewed to low complexity. A coiled-coil region spans residues 784–811 (KEKIRADRLRSTAQAQQRKMEDDELEAR). The disordered stretch occupies residues 840–870 (VSSSHLILDPPKEDVTVSPSSKTITSKKKKK).

In terms of assembly, interacts with RSPH6A. Does not appear to be part of the axonemal radial spoke complexes 1 or 2.

It localises to the cytoplasm. The protein localises to the cytoskeleton. Its subcellular location is the cilium axoneme. It is found in the cell projection. The protein resides in the cilium. It localises to the flagellum. May function as part of the axonemal radial spoke complex 3 (RS3). Radial spoke complexes are important for ciliary motility. This is Radial spoke head 10 homolog B2 (RSPH10B2) from Homo sapiens (Human).